We begin with the raw amino-acid sequence, 509 residues long: 2,3-bisphosphoglycerate-independent phosphoglycerate mutase (509 aa).

Mn(2+) contacts are provided by D14 and S64. S64 (phosphoserine intermediate) is an active-site residue. Substrate is bound by residues H125, 155–156 (RD), R187, R193, 259–262 (RADR), and K332. The Mn(2+) site is built by D399, H403, D440, H441, and H459.

The protein belongs to the BPG-independent phosphoglycerate mutase family. As to quaternary structure, monomer. Requires Mn(2+) as cofactor.

The catalysed reaction is (2R)-2-phosphoglycerate = (2R)-3-phosphoglycerate. It functions in the pathway carbohydrate degradation; glycolysis; pyruvate from D-glyceraldehyde 3-phosphate: step 3/5. In terms of biological role, catalyzes the interconversion of 2-phosphoglycerate and 3-phosphoglycerate. In Aeromonas salmonicida (strain A449), this protein is 2,3-bisphosphoglycerate-independent phosphoglycerate mutase.